A 344-amino-acid polypeptide reads, in one-letter code: MFVMFIVAEVDDEVCVKREVERAAGEVGVHVSLTPFQRREKAEKNLYVVTILGKDRVGIVRDITRAFLDFGINIERTSLTAREELISIEFLVDLGQRDAAEVRKRLRREAERLGLDIVMQPYSTFNREKRLIVFDMDSTLVEAEIIDELAKEAGVGDEVSKLTERAMRGEIGFKEALEERVRLLKGLPVEVLERIYSRIKLTEGAKELVRSLKEAGYKVAVVSGGFSYFTDRLKEELGLDYAFGNELEIENGRLTGRIKGRIIDASEKARIVEEIARKEGISPENVVAVGDGANDRLMIERAGLGIAFNAKEVLKDVADGSISKENLVGLASVLKLPAEFRKKV.

The 73-residue stretch at 48-120 (VVTILGKDRV…ERLGLDIVMQ (73 aa)) folds into the ACT domain. The active-site Nucleophile is D135. 2 residues coordinate Mg(2+): D135 and D137. The active-site Proton donor is the D137. Substrate is bound by residues E144, R180, 223–224 (SG), and K268. D291 contributes to the Mg(2+) binding site.

The protein belongs to the HAD-like hydrolase superfamily. SerB family. The cofactor is Mg(2+).

The enzyme catalyses O-phospho-L-serine + H2O = L-serine + phosphate. It carries out the reaction O-phospho-D-serine + H2O = D-serine + phosphate. It participates in amino-acid biosynthesis; L-serine biosynthesis; L-serine from 3-phospho-D-glycerate: step 3/3. The polypeptide is Phosphoserine phosphatase (Archaeoglobus fulgidus (strain ATCC 49558 / DSM 4304 / JCM 9628 / NBRC 100126 / VC-16)).